We begin with the raw amino-acid sequence, 186 residues long: Adenine phosphoribosyltransferase (186 aa).

It belongs to the purine/pyrimidine phosphoribosyltransferase family. Homodimer.

The protein localises to the cytoplasm. The catalysed reaction is AMP + diphosphate = 5-phospho-alpha-D-ribose 1-diphosphate + adenine. It functions in the pathway purine metabolism; AMP biosynthesis via salvage pathway; AMP from adenine: step 1/1. Catalyzes a salvage reaction resulting in the formation of AMP, that is energically less costly than de novo synthesis. This is Adenine phosphoribosyltransferase from Xanthomonas oryzae pv. oryzae (strain MAFF 311018).